The primary structure comprises 561 residues: Transmembrane protein 209 (561 aa).

A phosphoserine mark is found at Ser-9 and Ser-11. Residues 28-48 (VVLAWGLLNVSMAGMIYTEMT) traverse the membrane as a helical segment. Asn-57 carries N-linked (GlcNAc...) asparagine glycosylation. A helical membrane pass occupies residues 60–80 (YWPLWYIELALASLFSLNALF). Residue Ser-98 is modified to Phosphoserine. Disordered regions lie at residues 119-157 (DLAA…FTTS) and 195-234 (FSPS…DKED). Residues 133–157 (SIQGQSVLSYSPSRSPSTSPKFTTS) show a composition bias toward low complexity. A phosphoserine mark is found at Ser-201, Ser-222, and Ser-248. Over residues 220-229 (RSSPTVYNSP) the composition is skewed to polar residues. The tract at residues 250–271 (EEKQHRVKLGSPDSTSPSSSPT) is disordered. Residues 260–271 (SPDSTSPSSSPT) are compositionally biased toward low complexity. Asn-274 carries an N-linked (GlcNAc...) asparagine glycan. Position 278 is a phosphoserine (Ser-278).

Interacts with NUP205. In terms of tissue distribution, expressed in the testis.

It is found in the membrane. The protein localises to the nucleus envelope. The protein resides in the golgi apparatus. Its subcellular location is the cytoplasm. Functionally, nuclear envelope protein which in association with NUP205, may be involved in nuclear transport of various nuclear proteins in addition to MYC. In Homo sapiens (Human), this protein is Transmembrane protein 209 (TMEM209).